Consider the following 211-residue polypeptide: Probable GTP-binding protein EngB (211 aa).

The region spanning 26–200 (SGIEIAFAGR…RQKLDDWFAA (175 aa)) is the EngB-type G domain. GTP is bound by residues 34-41 (GRSNAGKS), 61-65 (GRTRL), 79-82 (DLPG), 146-149 (TKAD), and 179-181 (FSS). Ser41 and Thr63 together coordinate Mg(2+).

The protein belongs to the TRAFAC class TrmE-Era-EngA-EngB-Septin-like GTPase superfamily. EngB GTPase family. Requires Mg(2+) as cofactor.

Necessary for normal cell division and for the maintenance of normal septation. This chain is Probable GTP-binding protein EngB, found in Sodalis glossinidius (strain morsitans).